Consider the following 503-residue polypeptide: Probable cytosol aminopeptidase (503 aa).

Lysine 270 and aspartate 275 together coordinate Mn(2+). The active site involves lysine 282. Mn(2+) contacts are provided by aspartate 293, aspartate 352, and glutamate 354. Residue arginine 356 is part of the active site.

Belongs to the peptidase M17 family. Requires Mn(2+) as cofactor.

The protein localises to the cytoplasm. The enzyme catalyses Release of an N-terminal amino acid, Xaa-|-Yaa-, in which Xaa is preferably Leu, but may be other amino acids including Pro although not Arg or Lys, and Yaa may be Pro. Amino acid amides and methyl esters are also readily hydrolyzed, but rates on arylamides are exceedingly low.. The catalysed reaction is Release of an N-terminal amino acid, preferentially leucine, but not glutamic or aspartic acids.. Functionally, presumably involved in the processing and regular turnover of intracellular proteins. Catalyzes the removal of unsubstituted N-terminal amino acids from various peptides. This Enterobacter sp. (strain 638) protein is Probable cytosol aminopeptidase.